The following is a 284-amino-acid chain: Proton-translocating ferredoxin:NAD(+) oxidoreductase complex subunit B (284 aa).

Positions Met1–Asn26 are hydrophobic. The 4Fe-4S domain maps to Glu32–Lys92. [4Fe-4S] cluster contacts are provided by Cys49, Cys52, Cys57, Cys75, Cys138, Cys142, Cys148, Cys152, Cys172, Cys175, Cys178, Cys182, Cys217, Cys220, Cys223, Cys227, Cys246, Cys249, Cys254, and Cys258. 4Fe-4S ferredoxin-type domains follow at residues Gly133–Asn162, Gly163–Val192, Gly206–Asn237, and Ala239–Gly269.

Belongs to the 4Fe4S bacterial-type ferredoxin family. RnfB subfamily. In terms of assembly, the complex is composed of six subunits: RnfA, RnfB, RnfC, RnfD, RnfE and RnfG. The cofactor is [4Fe-4S] cluster.

The protein localises to the cell membrane. Its function is as follows. Part of a membrane-bound complex that couples electron transfer with translocation of ions across the membrane. Couples electron transfer from reduced ferredoxin to NAD(+) with translocation of H(+) out of the cell. Essential for energy conservation during autotrophic growth. Contributes to ATP synthesis during heterotrophic growth. The polypeptide is Proton-translocating ferredoxin:NAD(+) oxidoreductase complex subunit B (Clostridium ljungdahlii (strain ATCC 55383 / DSM 13528 / PETC)).